A 469-amino-acid polypeptide reads, in one-letter code: 3-isopropylmalate dehydratase large subunit (469 aa).

Cysteine 349, cysteine 410, and cysteine 413 together coordinate [4Fe-4S] cluster.

The protein belongs to the aconitase/IPM isomerase family. LeuC type 1 subfamily. In terms of assembly, heterodimer of LeuC and LeuD. [4Fe-4S] cluster serves as cofactor.

It carries out the reaction (2R,3S)-3-isopropylmalate = (2S)-2-isopropylmalate. It participates in amino-acid biosynthesis; L-leucine biosynthesis; L-leucine from 3-methyl-2-oxobutanoate: step 2/4. In terms of biological role, catalyzes the isomerization between 2-isopropylmalate and 3-isopropylmalate, via the formation of 2-isopropylmaleate. The protein is 3-isopropylmalate dehydratase large subunit of Aromatoleum aromaticum (strain DSM 19018 / LMG 30748 / EbN1) (Azoarcus sp. (strain EbN1)).